The chain runs to 269 residues: MIYQSKRNFQNHPFHLVSPSPWPLFTSISLFILTTATVLFMHGFEGFQYLVPVAVINVMYVMGLWFRDVISEGTYLGNHTNAVQKGLNLGVGLFIISEVFFFLAIFWAFFHSAISPSVELGAQWPPLGIQGINPFELPLLNTIILLSSGVTITYAHHSLIQGNRKGALYGTVVTILLAIVFTFFQGVEYTVSSFTISDSVYGSCFYFGTGFHGLHVIIGTAFLAVGLWRLAAYHLTDHHHLGYESGILYWHFVDVVWLFLYISVYYWGY.

7 helical membrane-spanning segments follow: residues 24–44, 46–66, 90–110, 138–160, 167–187, 207–227, and 247–267; these read LFTSISLFILTTATVLFMHGF, GFQYLVPVAVINVMYVMGLWF, GVGLFIISEVFFFLAIFWAFF, PLLNTIILLSSGVTITYAHHSLI, ALYGTVVTILLAIVFTFFQGV, FGTGFHGLHVIIGTAFLAVGL, and ILYWHFVDVVWLFLYISVYYW.

Belongs to the cytochrome c oxidase subunit 3 family. As to quaternary structure, component of the cytochrome c oxidase (complex IV, CIV), a multisubunit enzyme composed of a catalytic core of 3 subunits and several supernumerary subunits. The complex exists as a monomer or a dimer and forms supercomplexes (SCs) in the inner mitochondrial membrane with ubiquinol-cytochrome c oxidoreductase (cytochrome b-c1 complex, complex III, CIII).

The protein resides in the mitochondrion inner membrane. The catalysed reaction is 4 Fe(II)-[cytochrome c] + O2 + 8 H(+)(in) = 4 Fe(III)-[cytochrome c] + 2 H2O + 4 H(+)(out). In terms of biological role, component of the cytochrome c oxidase, the last enzyme in the mitochondrial electron transport chain which drives oxidative phosphorylation. The respiratory chain contains 3 multisubunit complexes succinate dehydrogenase (complex II, CII), ubiquinol-cytochrome c oxidoreductase (cytochrome b-c1 complex, complex III, CIII) and cytochrome c oxidase (complex IV, CIV), that cooperate to transfer electrons derived from NADH and succinate to molecular oxygen, creating an electrochemical gradient over the inner membrane that drives transmembrane transport and the ATP synthase. Cytochrome c oxidase is the component of the respiratory chain that catalyzes the reduction of oxygen to water. Electrons originating from reduced cytochrome c in the intermembrane space (IMS) are transferred via the dinuclear copper A center (CU(A)) of subunit 2 and heme A of subunit 1 to the active site in subunit 1, a binuclear center (BNC) formed by heme A3 and copper B (CU(B)). The BNC reduces molecular oxygen to 2 water molecules using 4 electrons from cytochrome c in the IMS and 4 protons from the mitochondrial matrix. The protein is Cytochrome c oxidase subunit 3 (cox3) of Emericella nidulans (Aspergillus nidulans).